The following is a 101-amino-acid chain: Putative pterin-4-alpha-carbinolamine dehydratase (101 aa).

It belongs to the pterin-4-alpha-carbinolamine dehydratase family.

It carries out the reaction (4aS,6R)-4a-hydroxy-L-erythro-5,6,7,8-tetrahydrobiopterin = (6R)-L-erythro-6,7-dihydrobiopterin + H2O. This Ralstonia pickettii (strain 12J) protein is Putative pterin-4-alpha-carbinolamine dehydratase.